Reading from the N-terminus, the 144-residue chain is Putative pre-16S rRNA nuclease (144 aa).

Belongs to the YqgF nuclease family.

The protein resides in the cytoplasm. Could be a nuclease involved in processing of the 5'-end of pre-16S rRNA. The protein is Putative pre-16S rRNA nuclease of Lactiplantibacillus plantarum (strain ATCC BAA-793 / NCIMB 8826 / WCFS1) (Lactobacillus plantarum).